Reading from the N-terminus, the 286-residue chain is Lipid phosphate phosphatase epsilon 2, chloroplastic (286 aa).

The transit peptide at 1-60 (MAASSSSLLLLHKPTYNFHFAASSVPTYINSARFRISSSIFPLDRRRRRRIWSVSGFKSM) directs the protein to the chloroplast. The next 5 membrane-spanning stretches (helical) occupy residues 133-149 (LWAVIGSVSNSVLSVAL), 173-193 (AQSISFISVFSVFSVMEWLGT), 194-214 (NVLSLFLSGFILALGSYFTWL), 226-246 (VVVGAIVGSVYSTLWYVTWNS), and 260-280 (IALFLVAAASALGFAVYVLLN).

Belongs to the PA-phosphatase related phosphoesterase family. As to expression, expressed in root tips, root branch points, cotyledons and leaves.

It is found in the plastid. It localises to the chloroplast inner membrane. Inhibited by Mg(2+). Exhibits phosphatidate phosphatase (PAP) activity in vitro. May play a secondary role as PAP in plastids. The polypeptide is Lipid phosphate phosphatase epsilon 2, chloroplastic (LPPE2) (Arabidopsis thaliana (Mouse-ear cress)).